Reading from the N-terminus, the 388-residue chain is Chorismate synthase (388 aa).

Residues Arg-39 and Arg-45 each contribute to the NADP(+) site. FMN-binding positions include 130–132 (RSS), 251–252 (NA), Gly-296, 311–315 (KPIPT), and Arg-337.

This sequence belongs to the chorismate synthase family. As to quaternary structure, homotetramer. The cofactor is FMNH2.

It catalyses the reaction 5-O-(1-carboxyvinyl)-3-phosphoshikimate = chorismate + phosphate. It participates in metabolic intermediate biosynthesis; chorismate biosynthesis; chorismate from D-erythrose 4-phosphate and phosphoenolpyruvate: step 7/7. Functionally, catalyzes the anti-1,4-elimination of the C-3 phosphate and the C-6 proR hydrogen from 5-enolpyruvylshikimate-3-phosphate (EPSP) to yield chorismate, which is the branch point compound that serves as the starting substrate for the three terminal pathways of aromatic amino acid biosynthesis. This reaction introduces a second double bond into the aromatic ring system. The polypeptide is Chorismate synthase (Lactococcus lactis subsp. lactis (strain IL1403) (Streptococcus lactis)).